A 225-amino-acid polypeptide reads, in one-letter code: 7-cyano-7-deazaguanine synthase (225 aa).

10–20 contributes to the ATP binding site; the sequence is LSGGIDSATAA. Positions 191, 199, 202, and 205 each coordinate Zn(2+).

This sequence belongs to the QueC family. It depends on Zn(2+) as a cofactor.

It carries out the reaction 7-carboxy-7-deazaguanine + NH4(+) + ATP = 7-cyano-7-deazaguanine + ADP + phosphate + H2O + H(+). The protein operates within purine metabolism; 7-cyano-7-deazaguanine biosynthesis. Functionally, catalyzes the ATP-dependent conversion of 7-carboxy-7-deazaguanine (CDG) to 7-cyano-7-deazaguanine (preQ(0)). The polypeptide is 7-cyano-7-deazaguanine synthase (Prochlorococcus marinus (strain NATL2A)).